Here is a 355-residue protein sequence, read N- to C-terminus: Methionine import ATP-binding protein MetN (355 aa).

One can recognise an ABC transporter domain in the interval 8–250 (LKNIDITFTQ…PQEDLTQEFI (243 aa)). ATP is bound at residue 42-49 (GYSGAGKS).

It belongs to the ABC transporter superfamily. Methionine importer (TC 3.A.1.24) family. The complex is composed of two ATP-binding proteins (MetN), two transmembrane proteins (MetI) and a solute-binding protein (MetQ).

It is found in the cell membrane. It carries out the reaction L-methionine(out) + ATP + H2O = L-methionine(in) + ADP + phosphate + H(+). The enzyme catalyses D-methionine(out) + ATP + H2O = D-methionine(in) + ADP + phosphate + H(+). Functionally, part of the ABC transporter complex MetNIQ involved in methionine import. Responsible for energy coupling to the transport system. This Streptococcus thermophilus (strain ATCC BAA-250 / LMG 18311) protein is Methionine import ATP-binding protein MetN.